The sequence spans 102 residues: Co-chaperonin GroES (102 aa).

The protein belongs to the GroES chaperonin family. In terms of assembly, heptamer of 7 subunits arranged in a ring. Interacts with the chaperonin GroEL.

It is found in the cytoplasm. Functionally, together with the chaperonin GroEL, plays an essential role in assisting protein folding. The GroEL-GroES system forms a nano-cage that allows encapsulation of the non-native substrate proteins and provides a physical environment optimized to promote and accelerate protein folding. GroES binds to the apical surface of the GroEL ring, thereby capping the opening of the GroEL channel. This is Co-chaperonin GroES from Streptomyces coelicolor (strain ATCC BAA-471 / A3(2) / M145).